A 185-amino-acid polypeptide reads, in one-letter code: Chromobox protein homolog 1 (185 aa).

Glycyl lysine isopeptide (Lys-Gly) (interchain with G-Cter in SUMO2) cross-links involve residues K9 and K33. In terms of domain architecture, Chromo 1 spans 21-79 (YVVEKVLDRRVVKGKVEYLLKWKGFSDEDNTWEPEENLDCPDLIAEFLQSQKTAHETDK). The disordered stretch occupies residues 63–124 (LIAEFLQSQK…RGLEPERIIG (62 aa)). The span at 73 to 89 (TAHETDKSEGGKRKADS) shows a compositional bias: basic and acidic residues. S89 and S91 each carry phosphoserine. Residues 96–121 (EESKPKKKKEESEKPRGFARGLEPER) are compositionally biased toward basic and acidic residues. Residues K99 and K150 each participate in a glycyl lysine isopeptide (Lys-Gly) (interchain with G-Cter in SUMO2) cross-link. The Chromo 2; shadow subtype domain maps to 117–175 (LEPERIIGATDSSGELMFLMKWKNSDEADLVPAKEANVKCPQVVISFYEERLTWHSYPS). The residue at position 175 (S175) is a Phosphoserine.

In terms of assembly, homodimer. Interacts directly with CHAF1A, EMSY, LBR, TIF1/TIF1A and TRIM28/TIF1B PXVXL motif via the chromoshadow domain. Interacts directly with histone H3 methylated at 'Lys-9' via the chromo domain. Interacts with SUV39H1 and SETDB1, KMT5B and KMT5C. Interacts with PRDM6. Interacts with POGZ. Interacts with CHAMP1. Interacts with INCENP. Interacts with SGO1; the CBX1 homodimer binds to one molecule of SGO1. Interacts with LRIF1 (via PxVxL motif). Interacts with HDGFL2. Interacts with CHD3. Interacts with CHD4. Not phosphorylated. Post-translationally, ubiquitinated. In terms of tissue distribution, expressed in all adult and embryonic tissues.

The protein resides in the nucleus. Component of heterochromatin. Recognizes and binds histone H3 tails methylated at 'Lys-9', leading to epigenetic repression. Interaction with lamin B receptor (LBR) can contribute to the association of the heterochromatin with the inner nuclear membrane. The chain is Chromobox protein homolog 1 (CBX1) from Homo sapiens (Human).